A 930-amino-acid polypeptide reads, in one-letter code: Translation initiation factor IF-2 (930 aa).

Residues leucine 27–phenylalanine 342 are disordered. Residues lysine 52 to proline 103 show a composition bias toward low complexity. Composition is skewed to basic and acidic residues over residues phenylalanine 112–lysine 128 and glutamine 136–arginine 178. Residues histidine 183–glutamine 195 are compositionally biased toward polar residues. Positions arginine 218 to lysine 245 are enriched in basic and acidic residues. A compositionally biased stretch (pro residues) spans proline 251–alanine 268. Over residues alanine 280 to arginine 297 the composition is skewed to basic and acidic residues. Positions asparagine 302–asparagine 318 are enriched in low complexity. The tr-type G domain occupies glutamate 432–glutamate 599. Residues glycine 441–threonine 448 form a G1 region. Glycine 441–threonine 448 contributes to the GTP binding site. A G2 region spans residues glycine 466–histidine 470. The tract at residues aspartate 487–glycine 490 is G3. GTP-binding positions include aspartate 487–histidine 491 and asparagine 541–aspartate 544. The interval asparagine 541–aspartate 544 is G4. A G5 region spans residues serine 577–lysine 579.

The protein belongs to the TRAFAC class translation factor GTPase superfamily. Classic translation factor GTPase family. IF-2 subfamily.

It is found in the cytoplasm. In terms of biological role, one of the essential components for the initiation of protein synthesis. Protects formylmethionyl-tRNA from spontaneous hydrolysis and promotes its binding to the 30S ribosomal subunits. Also involved in the hydrolysis of GTP during the formation of the 70S ribosomal complex. The protein is Translation initiation factor IF-2 of Streptococcus sanguinis (strain SK36).